The primary structure comprises 21 residues: Cupiennin-6e (21 aa).

S21 is modified (serine amide).

In terms of tissue distribution, expressed by the venom gland.

Its subcellular location is the secreted. In Cupiennius salei (American wandering spider), this protein is Cupiennin-6e.